The primary structure comprises 208 residues: ATP synthase subunit beta, chloroplastic (208 aa).

Belongs to the ATPase alpha/beta chains family. F-type ATPases have 2 components, CF(1) - the catalytic core - and CF(0) - the membrane proton channel. CF(1) has five subunits: alpha(3), beta(3), gamma(1), delta(1), epsilon(1). CF(0) has four main subunits: a(1), b(1), b'(1) and c(9-12).

Its subcellular location is the plastid. The protein resides in the chloroplast thylakoid membrane. It carries out the reaction ATP + H2O + 4 H(+)(in) = ADP + phosphate + 5 H(+)(out). In terms of biological role, produces ATP from ADP in the presence of a proton gradient across the membrane. The catalytic sites are hosted primarily by the beta subunits. In Lonchitis hirsuta (Tomato fern), this protein is ATP synthase subunit beta, chloroplastic (atpB).